The following is a 392-amino-acid chain: Imidazolonepropionase (392 aa).

2 residues coordinate Fe(3+): His69 and His71. His69 and His71 together coordinate Zn(2+). 4-imidazolone-5-propanoate-binding residues include Arg78, Tyr136, and His163. Residue Tyr136 participates in N-formimidoyl-L-glutamate binding. His226 contributes to the Fe(3+) binding site. His226 provides a ligand contact to Zn(2+). Gln229 lines the 4-imidazolone-5-propanoate pocket. Asp302 contacts Fe(3+). Asp302 contributes to the Zn(2+) binding site. Residues Asn304 and Gly306 each coordinate N-formimidoyl-L-glutamate. Residue Ser307 participates in 4-imidazolone-5-propanoate binding.

This sequence belongs to the metallo-dependent hydrolases superfamily. HutI family. Requires Zn(2+) as cofactor. It depends on Fe(3+) as a cofactor.

The protein resides in the cytoplasm. It carries out the reaction 4-imidazolone-5-propanoate + H2O = N-formimidoyl-L-glutamate. It functions in the pathway amino-acid degradation; L-histidine degradation into L-glutamate; N-formimidoyl-L-glutamate from L-histidine: step 3/3. Functionally, catalyzes the hydrolytic cleavage of the carbon-nitrogen bond in imidazolone-5-propanoate to yield N-formimidoyl-L-glutamate. It is the third step in the universal histidine degradation pathway. The chain is Imidazolonepropionase from Salinispora tropica (strain ATCC BAA-916 / DSM 44818 / JCM 13857 / NBRC 105044 / CNB-440).